A 245-amino-acid polypeptide reads, in one-letter code: rRNA adenine N-6-methyltransferase (245 aa).

S-adenosyl-L-methionine is bound by residues asparagine 10, leucine 12, glycine 37, glutamate 58, aspartate 83, and asparagine 100.

This sequence belongs to the class I-like SAM-binding methyltransferase superfamily. rRNA adenine N(6)-methyltransferase family.

It carries out the reaction adenosine(2085) in 23S rRNA + 2 S-adenosyl-L-methionine = N(6)-dimethyladenosine(2085) in 23S rRNA + 2 S-adenosyl-L-homocysteine + 2 H(+). Functionally, this protein produces a dimethylation of the adenine residue at position 2085 in 23S rRNA, resulting in reduced affinity between ribosomes and macrolide-lincosamide-streptogramin B antibiotics. This is rRNA adenine N-6-methyltransferase (ermB) from Enterococcus faecalis (strain ATCC 700802 / V583).